The following is a 60-amino-acid chain: Hemocyte defensin Cg-Defh1 (60 aa).

The signal sequence occupies residues L1–A17. Beta-D-GlcNAc-(1-&gt;4)-Mur2Ac(oyl-L-Ala-gamma-D-Glu-L-Lys-D-Ala-D-Ala)-di-trans,octa-cis-undecaprenyl diphosphate is bound by residues F19, G20, and C21. Disulfide bonds link C21–C42, C28–C51, C32–C53, and C37–C56. The segment at P22–Q25 is binds to membrane interface. H31 serves as a coordination point for beta-D-GlcNAc-(1-&gt;4)-Mur2Ac(oyl-L-Ala-gamma-D-Glu-L-Lys-D-Ala-D-Ala)-di-trans,octa-cis-undecaprenyl diphosphate. The segment at D43–L49 is binds to membrane interface. C51 lines the beta-D-GlcNAc-(1-&gt;4)-Mur2Ac(oyl-L-Ala-gamma-D-Glu-L-Lys-D-Ala-D-Ala)-di-trans,octa-cis-undecaprenyl diphosphate pocket.

Belongs to the invertebrate defensin family. In terms of tissue distribution, expressed in hemocytes.

It is found in the secreted. The protein localises to the target cell membrane. In terms of biological role, antibacterial peptide mostly active against Gram-positive bacteria. It acts by selectively inhibiting peptidoglycan biosynthesis through complex formation with the cell wall precursor lipid II (1:1 molar ratio) thus inhibiting cell wall synthesis. It does not disrupt cell membranes. Is noticeably less potent than Cg-Defh2 and Cg-Defm. Shows no or limited activities against Gram-negative bacteria. This chain is Hemocyte defensin Cg-Defh1, found in Magallana gigas (Pacific oyster).